Consider the following 676-residue polypeptide: Probable ERAD-associated E3 ubiquitin-protein ligase ASI1 (676 aa).

At 1-78 (MSTNILQHVK…TLQLAKVGIR (78 aa)) the chain is on the perinuclear space side. Asn24, Asn34, Asn46, and Asn66 each carry an N-linked (GlcNAc...) asparagine glycan. The chain crosses the membrane as a helical span at residues 79–99 (MFFSYSVSKYAVLCFSTAIIL). At 100–126 (NRLTVMSSLRSNSTNIRLPLWSKTLLH) the chain is on the nuclear side. A helical membrane pass occupies residues 127-147 (LVATLSLVKALLQILSQFGLM). Residues 148 to 156 (HELHVSDTD) are Perinuclear space-facing. A helical transmembrane segment spans residues 157–177 (FYALSVYLFVALSDCIEIFIS). Residues 178-181 (STTN) lie on the Nuclear side of the membrane. A helical membrane pass occupies residues 182–202 (VPSLICSDFSIWGLSLNLYII). The Perinuclear space portion of the chain corresponds to 203–277 (SKMPAGQQHI…NICLIHNYFP (75 aa)). A helical membrane pass occupies residues 278–298 (GFFYISTILLASIGIFLKALF). At 299-676 (TSNPFRSLYS…VKGYSKLNIV (378 aa)) the chain is on the nuclear side. An RING-type; atypical zinc finger spans residues 624-664 (CLICKVNKRNIVTWPCRCLALCDDCRISLGYKGFATCVSCD).

Component of the Asi complex, which contains ASI1, ASI2 and ASI3. Interacts directly with ASI1.

The protein localises to the nucleus inner membrane. It carries out the reaction S-ubiquitinyl-[E2 ubiquitin-conjugating enzyme]-L-cysteine + [acceptor protein]-L-lysine = [E2 ubiquitin-conjugating enzyme]-L-cysteine + N(6)-ubiquitinyl-[acceptor protein]-L-lysine.. Part of the nuclear inner membrane (INM)-specific branch of the ER-associated degradation (ERAD) pathway, required for the elimination of misfolded proteins in the INM, a specialized ER subdomain. Required for ERG11 degradation. Negative regulator of SPS-sensor signaling. Together with ASI2 and ASI3, prevents the unprocessed precursor forms of STP1 and STP2 that escape cytoplasmic anchoring from inducing SPS-sensor-regulated genes in the absence of inducing signals. Controls amino acid permease (AAP) gene expression in response to amino acid availability, a process mediated by the transcription factors STP1 and STP1. The protein is Probable ERAD-associated E3 ubiquitin-protein ligase ASI1 (ASI3) of Saccharomyces cerevisiae (strain ATCC 204508 / S288c) (Baker's yeast).